The primary structure comprises 214 residues: NAD(P)H-quinone oxidoreductase subunit 5, chloroplastic (214 aa).

A run of 2 helical transmembrane segments spans residues Leu84 to Phe104 and Ser152 to Phe172.

This sequence belongs to the complex I subunit 5 family. In terms of assembly, NDH is composed of at least 16 different subunits, 5 of which are encoded in the nucleus.

It localises to the plastid. The protein resides in the chloroplast thylakoid membrane. It carries out the reaction a plastoquinone + NADH + (n+1) H(+)(in) = a plastoquinol + NAD(+) + n H(+)(out). It catalyses the reaction a plastoquinone + NADPH + (n+1) H(+)(in) = a plastoquinol + NADP(+) + n H(+)(out). Its function is as follows. NDH shuttles electrons from NAD(P)H:plastoquinone, via FMN and iron-sulfur (Fe-S) centers, to quinones in the photosynthetic chain and possibly in a chloroplast respiratory chain. The immediate electron acceptor for the enzyme in this species is believed to be plastoquinone. Couples the redox reaction to proton translocation, and thus conserves the redox energy in a proton gradient. The sequence is that of NAD(P)H-quinone oxidoreductase subunit 5, chloroplastic (ndhF) from Brachypodium pinnatum (Tor grass).